The sequence spans 638 residues: Phosphomethylpyrimidine synthase (638 aa).

Substrate-binding positions include Asn243, Met272, Tyr301, His337, 357–359, 398–401, and Glu437; these read SRG and DGLR. His441 is a Zn(2+) binding site. Tyr464 serves as a coordination point for substrate. His505 contacts Zn(2+). Residues Cys585, Cys588, and Cys593 each coordinate [4Fe-4S] cluster.

It belongs to the ThiC family. Homodimer. Requires [4Fe-4S] cluster as cofactor.

The catalysed reaction is 5-amino-1-(5-phospho-beta-D-ribosyl)imidazole + S-adenosyl-L-methionine = 4-amino-2-methyl-5-(phosphooxymethyl)pyrimidine + CO + 5'-deoxyadenosine + formate + L-methionine + 3 H(+). The protein operates within cofactor biosynthesis; thiamine diphosphate biosynthesis. Catalyzes the synthesis of the hydroxymethylpyrimidine phosphate (HMP-P) moiety of thiamine from aminoimidazole ribotide (AIR) in a radical S-adenosyl-L-methionine (SAM)-dependent reaction. The polypeptide is Phosphomethylpyrimidine synthase (Aromatoleum aromaticum (strain DSM 19018 / LMG 30748 / EbN1) (Azoarcus sp. (strain EbN1))).